A 182-amino-acid polypeptide reads, in one-letter code: Isopentenyl-diphosphate Delta-isomerase (182 aa).

Residues His-25 and His-32 each coordinate Mn(2+). The Nudix hydrolase domain maps to 30-164 (LLHLAFSSWL…PWAFSPWMVM (135 aa)). The active site involves Cys-67. Residue Cys-67 coordinates Mg(2+). His-69 is a binding site for Mn(2+). Residue Glu-87 participates in Mg(2+) binding. Mn(2+) is bound by residues Glu-114 and Glu-116. Residue Glu-116 is part of the active site.

This sequence belongs to the IPP isomerase type 1 family. Homodimer. Mg(2+) is required as a cofactor. Mn(2+) serves as cofactor.

It is found in the cytoplasm. It catalyses the reaction isopentenyl diphosphate = dimethylallyl diphosphate. Its pathway is isoprenoid biosynthesis; dimethylallyl diphosphate biosynthesis; dimethylallyl diphosphate from isopentenyl diphosphate: step 1/1. Catalyzes the 1,3-allylic rearrangement of the homoallylic substrate isopentenyl (IPP) to its highly electrophilic allylic isomer, dimethylallyl diphosphate (DMAPP). The sequence is that of Isopentenyl-diphosphate Delta-isomerase from Escherichia coli O6:H1 (strain CFT073 / ATCC 700928 / UPEC).